The sequence spans 485 residues: Glycogen synthase (485 aa).

An ADP-alpha-D-glucose-binding site is contributed by K20.

This sequence belongs to the glycosyltransferase 1 family. Bacterial/plant glycogen synthase subfamily.

It carries out the reaction [(1-&gt;4)-alpha-D-glucosyl](n) + ADP-alpha-D-glucose = [(1-&gt;4)-alpha-D-glucosyl](n+1) + ADP + H(+). The protein operates within glycan biosynthesis; glycogen biosynthesis. Its function is as follows. Synthesizes alpha-1,4-glucan chains using ADP-glucose. The protein is Glycogen synthase of Vibrio vulnificus (strain YJ016).